Here is a 221-residue protein sequence, read N- to C-terminus: Octanoyltransferase (221 aa).

The BPL/LPL catalytic domain maps to 31 to 216 (GQIGDTLLLL…SLCAIFDLRP (186 aa)). Residues 76 to 83 (RGGEVTYH), 145 to 147 (AIG), and 159 to 161 (GLA) each bind substrate. Cysteine 177 (acyl-thioester intermediate) is an active-site residue.

The protein belongs to the LipB family.

It is found in the cytoplasm. It carries out the reaction octanoyl-[ACP] + L-lysyl-[protein] = N(6)-octanoyl-L-lysyl-[protein] + holo-[ACP] + H(+). Its pathway is protein modification; protein lipoylation via endogenous pathway; protein N(6)-(lipoyl)lysine from octanoyl-[acyl-carrier-protein]: step 1/2. Catalyzes the transfer of endogenously produced octanoic acid from octanoyl-acyl-carrier-protein onto the lipoyl domains of lipoate-dependent enzymes. Lipoyl-ACP can also act as a substrate although octanoyl-ACP is likely to be the physiological substrate. The chain is Octanoyltransferase from Chloroflexus aggregans (strain MD-66 / DSM 9485).